The chain runs to 102 residues: Small ribosomal subunit protein uS10 (102 aa).

It belongs to the universal ribosomal protein uS10 family. In terms of assembly, part of the 30S ribosomal subunit.

Functionally, involved in the binding of tRNA to the ribosomes. The sequence is that of Small ribosomal subunit protein uS10 from Ligilactobacillus salivarius (strain UCC118) (Lactobacillus salivarius).